A 476-amino-acid chain; its full sequence is Probable flippase AglR (476 aa).

14 consecutive transmembrane segments (helical) span residues Ala-7–Val-29, Gly-34–Val-56, Val-83–Val-103, Thr-112–Leu-132, Ala-146–Val-166, Ala-168–Leu-188, Trp-222–Val-242, Ile-246–Ser-266, Val-287–Leu-307, Tyr-310–Val-330, Phe-354–Pro-373, Val-377–Val-396, Val-409–Ile-429, and Ile-439–Leu-459.

It belongs to the AglR/Agl15 family.

The protein resides in the cell membrane. It participates in cell surface structure biogenesis; S-layer biogenesis. Its function is as follows. Involved in the assembly of a N-linked pentasaccharide that decorates the S-layer glycoprotein and flagellins. Probably mediates or contributes to the translocation of the dolichol-phosphate-mannose across the membrane. In Haloferax volcanii (strain ATCC 29605 / DSM 3757 / JCM 8879 / NBRC 14742 / NCIMB 2012 / VKM B-1768 / DS2) (Halobacterium volcanii), this protein is Probable flippase AglR (aglR).